Consider the following 379-residue polypeptide: Lipid-A-disaccharide synthase (379 aa).

The protein belongs to the LpxB family.

It catalyses the reaction a lipid X + a UDP-2-N,3-O-bis[(3R)-3-hydroxyacyl]-alpha-D-glucosamine = a lipid A disaccharide + UDP + H(+). Its pathway is bacterial outer membrane biogenesis; LPS lipid A biosynthesis. In terms of biological role, condensation of UDP-2,3-diacylglucosamine and 2,3-diacylglucosamine-1-phosphate to form lipid A disaccharide, a precursor of lipid A, a phosphorylated glycolipid that anchors the lipopolysaccharide to the outer membrane of the cell. The protein is Lipid-A-disaccharide synthase of Vibrio parahaemolyticus serotype O3:K6 (strain RIMD 2210633).